The primary structure comprises 705 residues: Double-strand break repair protein MRE11 (705 aa).

Mn(2+)-binding residues include Asp15, His17, Asp55, and Asn122. His123 acts as the Proton donor in catalysis. Residues His220, His248, and His250 each contribute to the Mn(2+) site. Residues 505-514 (RSLRSKEDSR) are compositionally biased toward basic and acidic residues. The segment at 505 to 705 (RSLRSKEDSR…TRNYGAVRRR (201 aa)) is disordered. Polar residues-rich tracts occupy residues 515–538 (FTSS…LNSF) and 589–605 (SMKQ…SSAA). A compositionally biased stretch (basic residues) spans 641–663 (GRKRAAPRGGRGRGRGATAKRGR).

The protein belongs to the MRE11/RAD32 family. Component of the MRN complex composed of two heterodimers RAD50/MRE11 associated with a single NBS1. It depends on Mn(2+) as a cofactor.

It is found in the nucleus. Its subcellular location is the chromosome. In terms of biological role, core component of the MRN complex, which plays a central role in double-strand break (DSB) repair, DNA recombination, maintenance of telomere integrity and meiosis. The MRN complex is involved in the repair of DNA double-strand breaks (DSBs) via homologous recombination (HR), an error-free mechanism which primarily occurs during S and G2 phases. The complex (1) mediates the end resection of damaged DNA, which generates proper single-stranded DNA, a key initial steps in HR, and is (2) required for the recruitment of other repair factors and efficient activation of ATM and ATR upon DNA damage. Within the MRN complex, MRE11 possesses both single-strand endonuclease activity and double-strand-specific 3'-5' exonuclease activity. MRE11 first endonucleolytically cleaves the 5' strand at DNA DSB ends to prevent non-homologous end joining (NHEJ) and licence HR. It then generates a single-stranded DNA gap via 3' to 5' exonucleolytic degradation, which is required for single-strand invasion and recombination. The polypeptide is Double-strand break repair protein MRE11 (Oryza sativa subsp. indica (Rice)).